The sequence spans 344 residues: Transcription factor JunB (344 aa).

Residues Lys4, Lys33, and Lys36 each participate in a glycyl lysine isopeptide (Lys-Gly) (interchain with G-Cter in SUMO2) cross-link. The segment covering 51–65 (KGPGARGPGPEGSGA) has biased composition (gly residues). Residues 51–75 (KGPGARGPGPEGSGAGSYFSGQGSD) form a disordered region. A Glycyl lysine isopeptide (Lys-Gly) (interchain with G-Cter in SUMO2) cross-link involves residue Lys81. Residues Thr102 and Thr104 each carry the phosphothreonine modification. Ser117 is modified (phosphoserine). A Glycyl lysine isopeptide (Lys-Gly) (interchain with G-Cter in SUMO2) cross-link involves residue Lys138. Disordered regions lie at residues 181 to 202 (NLSSYSPASAPSGGSGTAVGTG) and 237 to 257 (KEEPQTVPEARSRDATPPVSP). The span at 183–192 (SSYSPASAPS) shows a compositional bias: low complexity. An N6-acetyllysine; alternate modification is found at Lys237. Lys237 participates in a covalent cross-link: Glycyl lysine isopeptide (Lys-Gly) (interchain with G-Cter in SUMO1); alternate. Lys237 is covalently cross-linked (Glycyl lysine isopeptide (Lys-Gly) (interchain with G-Cter in SUMO2); alternate). Positions 237–250 (KEEPQTVPEARSRD) are enriched in basic and acidic residues. Phosphoserine is present on Ser248. At Thr252 the chain carries Phosphothreonine. Ser256 is modified (phosphoserine). Residues 265–292 (RIKVERKRLRNRLAATKCRKRKLERIAR) are basic motif. The region spanning 265–328 (RIKVERKRLR…AQLKQKVMTH (64 aa)) is the bZIP domain. The leucine-zipper stretch occupies residues 293–321 (LEDKVKTLKAENAGLSSAAGLLREQVAQL). Residue Lys340 forms a Glycyl lysine isopeptide (Lys-Gly) (interchain with G-Cter in SUMO2) linkage.

Belongs to the bZIP family. Jun subfamily. In terms of assembly, binds DNA as a homodimer or as a heterodimer with another member of the Jun/Fos family. Component of an AP-1 transcription factor complex composed of JUN-FOS heterodimers. As part of the AP-1 transcription factor complex, forms heterodimers with FOSB, thereby binding to the AP-1 consensus sequence and stimulating transcription. Interacts with NFE2 (via its WW domains). In terms of processing, ubiquitinated by ITCH, leading to its degradation.

The protein resides in the nucleus. Functionally, transcription factor involved in regulating gene activity following the primary growth factor response. Binds to the DNA sequence 5'-TGA[GC]TCA-3'. Heterodimerizes with proteins of the FOS family to form an AP-1 transcription complex, thereby enhancing its DNA binding activity to an AP-1 consensus sequence 5'-TGA[GC]TCA-3' and enhancing its transcriptional activity. The sequence is that of Transcription factor JunB (Junb) from Mus musculus (Mouse).